We begin with the raw amino-acid sequence, 672 residues long: UvrABC system protein B (672 aa).

Residues 26-183 form the Helicase ATP-binding domain; sequence EGLEDGLAHQ…RRLSELQYVR (158 aa). Residue 39–46 participates in ATP binding; the sequence is GVTGSGKT. The Beta-hairpin signature appears at 92–115; it reads YYDYYQPEAYVPSSDTFIEKDASV. A Helicase C-terminal domain is found at 431-597; sequence QVDDLLSEIN…ALNKKVTDIL (167 aa). A disordered region spans residues 601–623; sequence DGPVRSRTKGARGQRAAEPHPDY. Positions 632–667 constitute a UVR domain; it reads EQQIQRLETQMYQHAQNLEFEQAAALRDEIHILREQ.

It belongs to the UvrB family. In terms of assembly, forms a heterotetramer with UvrA during the search for lesions. Interacts with UvrC in an incision complex.

The protein localises to the cytoplasm. The UvrABC repair system catalyzes the recognition and processing of DNA lesions. A damage recognition complex composed of 2 UvrA and 2 UvrB subunits scans DNA for abnormalities. Upon binding of the UvrA(2)B(2) complex to a putative damaged site, the DNA wraps around one UvrB monomer. DNA wrap is dependent on ATP binding by UvrB and probably causes local melting of the DNA helix, facilitating insertion of UvrB beta-hairpin between the DNA strands. Then UvrB probes one DNA strand for the presence of a lesion. If a lesion is found the UvrA subunits dissociate and the UvrB-DNA preincision complex is formed. This complex is subsequently bound by UvrC and the second UvrB is released. If no lesion is found, the DNA wraps around the other UvrB subunit that will check the other stand for damage. In Edwardsiella ictaluri (strain 93-146), this protein is UvrABC system protein B.